We begin with the raw amino-acid sequence, 186 residues long: Oligoribonuclease (186 aa).

Residues 12-175 form the Exonuclease domain; the sequence is LIWIDLEMTG…DDIKDSIKEL (164 aa). Tyr-133 is a catalytic residue.

It belongs to the oligoribonuclease family.

Its subcellular location is the cytoplasm. Its function is as follows. 3'-to-5' exoribonuclease specific for small oligoribonucleotides. This Wigglesworthia glossinidia brevipalpis protein is Oligoribonuclease.